The primary structure comprises 183 residues: Probable actin-related protein 2/3 complex subunit 3 (183 aa).

This sequence belongs to the ARPC3 family. As to quaternary structure, component of the Arp2/3 complex.

The protein localises to the cytoplasm. The protein resides in the cytoskeleton. Functionally, functions as a component of the Arp2/3 complex which is involved in regulation of actin polymerization and together with an activating nucleation-promoting factor (NPF) mediates the formation of branched actin networks. The chain is Probable actin-related protein 2/3 complex subunit 3 (arx-5) from Caenorhabditis elegans.